A 704-amino-acid polypeptide reads, in one-letter code: Polyribonucleotide nucleotidyltransferase (704 aa).

Positions 488 and 494 each coordinate Mg(2+). In terms of domain architecture, KH spans Pro-555–Ile-614. Residues Gly-624–Lys-692 form the S1 motif domain.

This sequence belongs to the polyribonucleotide nucleotidyltransferase family. As to quaternary structure, component of the RNA degradosome, which is a multiprotein complex involved in RNA processing and mRNA degradation. It depends on Mg(2+) as a cofactor.

It is found in the cytoplasm. The catalysed reaction is RNA(n+1) + phosphate = RNA(n) + a ribonucleoside 5'-diphosphate. Involved in mRNA degradation. Catalyzes the phosphorolysis of single-stranded polyribonucleotides processively in the 3'- to 5'-direction. The sequence is that of Polyribonucleotide nucleotidyltransferase from Shewanella sediminis (strain HAW-EB3).